Here is a 332-residue protein sequence, read N- to C-terminus: Fructose-1,6-bisphosphatase class 1 1 (332 aa).

Mg(2+) is bound by residues Glu92, Asp115, Leu117, and Asp118. Residues 118–121 (DGSS), Asn211, Tyr244, 262–264 (YLY), and Lys274 each bind substrate. A Mg(2+)-binding site is contributed by Glu280.

The protein belongs to the FBPase class 1 family. In terms of assembly, homotetramer. It depends on Mg(2+) as a cofactor.

The protein resides in the cytoplasm. The enzyme catalyses beta-D-fructose 1,6-bisphosphate + H2O = beta-D-fructose 6-phosphate + phosphate. The protein operates within carbohydrate biosynthesis; gluconeogenesis. In Christiangramia forsetii (strain DSM 17595 / CGMCC 1.15422 / KT0803) (Gramella forsetii), this protein is Fructose-1,6-bisphosphatase class 1 1.